Here is a 289-residue protein sequence, read N- to C-terminus: 4-hydroxybenzoate octaprenyltransferase (289 aa).

A run of 8 helical transmembrane segments spans residues 23 to 43, 46 to 66, 99 to 119, 141 to 161, 163 to 183, 213 to 233, 234 to 254, and 268 to 288; these read IGALLLLWPTLWALWVATPGV, LWILAVFVAGVWLMRAAGCVV, LFVVLVALSFLLVLTLNTMTI, LPQVVLGAAFGWSIPMAFAAV, ESVPLSCWLMFLANILWAVAY, LIIGILQIAVLALMALIGWLN, GLGWGYYWSVLVAGALFVYQQ, and AFMNNNYVGLVLFLGLAMSYV.

Belongs to the UbiA prenyltransferase family. Requires Mg(2+) as cofactor.

The protein localises to the cell inner membrane. The enzyme catalyses all-trans-octaprenyl diphosphate + 4-hydroxybenzoate = 4-hydroxy-3-(all-trans-octaprenyl)benzoate + diphosphate. The protein operates within cofactor biosynthesis; ubiquinone biosynthesis. Functionally, catalyzes the prenylation of para-hydroxybenzoate (PHB) with an all-trans polyprenyl group. Mediates the second step in the final reaction sequence of ubiquinone-8 (UQ-8) biosynthesis, which is the condensation of the polyisoprenoid side chain with PHB, generating the first membrane-bound Q intermediate 3-octaprenyl-4-hydroxybenzoate. The sequence is that of 4-hydroxybenzoate octaprenyltransferase from Citrobacter koseri (strain ATCC BAA-895 / CDC 4225-83 / SGSC4696).